A 351-amino-acid chain; its full sequence is Translation initiation factor eIF2B subunit beta (351 aa).

The protein belongs to the eIF-2B alpha/beta/delta subunits family. As to quaternary structure, component of the translation initiation factor 2B (eIF2B) complex which is a heterodecamer of two sets of five different subunits: alpha, beta, gamma, delta and epsilon. Subunits alpha, beta and delta comprise a regulatory subcomplex and subunits epsilon and gamma comprise a catalytic subcomplex. Within the complex, the hexameric regulatory complex resides at the center, with the two heterodimeric catalytic subcomplexes bound on opposite sides.

It is found in the cytoplasm. It localises to the cytosol. Its activity is regulated as follows. Activated by the chemical integrated stress response (ISR) inhibitor ISRIB which stimulates guanine nucleotide exchange factor activity for both phosphorylated and unphosphorylated eIF2. In terms of biological role, acts as a component of the translation initiation factor 2B (eIF2B) complex, which catalyzes the exchange of GDP for GTP on eukaryotic initiation factor 2 (eIF2) gamma subunit. Its guanine nucleotide exchange factor activity is repressed when bound to eIF2 complex phosphorylated on the alpha subunit, thereby limiting the amount of methionyl-initiator methionine tRNA available to the ribosome and consequently global translation is repressed. In Rattus norvegicus (Rat), this protein is Translation initiation factor eIF2B subunit beta (Eif2b2).